Consider the following 155-residue polypeptide: Small ribosomal subunit protein uS7cz/uS7cy (155 aa).

The protein belongs to the universal ribosomal protein uS7 family. Part of the 30S ribosomal subunit.

Its subcellular location is the plastid. It is found in the chloroplast. Functionally, one of the primary rRNA binding proteins, it binds directly to 16S rRNA where it nucleates assembly of the head domain of the 30S subunit. The sequence is that of Small ribosomal subunit protein uS7cz/uS7cy (rps7-A) from Phalaenopsis aphrodite subsp. formosana (Moth orchid).